Consider the following 293-residue polypeptide: Bifunctional protein FolD (293 aa).

Residues 164–166 (GRS), serine 193, and threonine 234 each bind NADP(+).

This sequence belongs to the tetrahydrofolate dehydrogenase/cyclohydrolase family. Homodimer.

It catalyses the reaction (6R)-5,10-methylene-5,6,7,8-tetrahydrofolate + NADP(+) = (6R)-5,10-methenyltetrahydrofolate + NADPH. The enzyme catalyses (6R)-5,10-methenyltetrahydrofolate + H2O = (6R)-10-formyltetrahydrofolate + H(+). The protein operates within one-carbon metabolism; tetrahydrofolate interconversion. Catalyzes the oxidation of 5,10-methylenetetrahydrofolate to 5,10-methenyltetrahydrofolate and then the hydrolysis of 5,10-methenyltetrahydrofolate to 10-formyltetrahydrofolate. The protein is Bifunctional protein FolD of Bacteroides fragilis (strain ATCC 25285 / DSM 2151 / CCUG 4856 / JCM 11019 / LMG 10263 / NCTC 9343 / Onslow / VPI 2553 / EN-2).